A 427-amino-acid polypeptide reads, in one-letter code: Inward rectifier potassium channel 2 (427 aa).

At 1-81 (MGSVRTNRYS…IFTTCVDIRW (81 aa)) the chain is on the cytoplasmic side. The residue at position 76 (Cys76) is an S-nitrosocysteine. A helical transmembrane segment spans residues 82-106 (RWMLVIFCLAFVLSWLFFGCVFWLI). The Extracellular portion of the chain corresponds to 107 to 128 (ALLHGDLDASKESKACVSEVNS). The helical; Pore-forming intramembrane region spans 129–140 (FTAAFLFSIETQ). The segment at residues 141 to 147 (TTIGYGF) is an intramembrane region (pore-forming). Positions 142–147 (TIGYGF) match the Selectivity filter motif. The Extracellular portion of the chain corresponds to 148-156 (RCVTDECPI). A helical membrane pass occupies residues 157-178 (AVFMVVFQSIVGCIIDAFIIGA). Topologically, residues 179 to 427 (VMAKMAKPKK…PRPLRRESEI (249 aa)) are cytoplasmic. Residues 181-208 (AKMAKPKKRNETLVFSHNAVIAMRDGKL) form a polyphosphoinositide (PIP2)-binding region. Residues 384-427 (SKEEDDSENGVPESTSTDTPPDIDLHNQASVPLEPRPLRRESEI) are disordered. Residues 425–427 (SEI) carry the PDZ-binding motif.

It belongs to the inward rectifier-type potassium channel (TC 1.A.2.1) family. KCNJ2 subfamily. In terms of assembly, homotetramer. Homomultimeric and heteromultimeric association with KCNJ4/Kir2.3. Can form heteromeric channels with Kir2.6/KCNJ18. Associates, via its PDZ-recognition domain, with a complex containing LIN7A, LIN7B, LIN7C, DLG1, CASK and APBA1. In terms of processing, S-nitrosylation increases the open probability and inward rectifying currents.

It localises to the cell membrane. The protein resides in the sarcolemma. Its subcellular location is the T-tubule. The enzyme catalyses K(+)(in) = K(+)(out). Its activity is regulated as follows. Activated by phosphatidylinositol 4,5 biphosphate (PtdIns(4,5)P2). Its function is as follows. Inward rectifier potassium channels are characterized by a greater tendency to allow potassium to flow into the cell rather than out of it. Their voltage dependence is regulated by the concentration of extracellular potassium; as external potassium is raised, the voltage range of the channel opening shifts to more positive voltages. The inward rectification is mainly due to the blockage of outward current by internal magnesium. Can be blocked by extracellular barium and cesium. Probably participates in establishing action potential waveform and excitability of neuronal and muscle tissues. In Sus scrofa (Pig), this protein is Inward rectifier potassium channel 2 (KCNJ2).